Reading from the N-terminus, the 713-residue chain is KNR4/SMI1 homolog (713 aa).

4 disordered regions span residues 18–129 (PDRY…VTRD), 255–274 (IFINPNAGSPNSSTPGSPVA), 400–457 (RHQM…SKPA), and 500–713 (EPLE…KGKK). Low complexity predominate over residues 22–34 (ASQQRSSKASQSA). Positions 35–65 (GANSQNRPLYNNDDNQSEMYQASSSYTGGYT) are enriched in polar residues. 2 stretches are compositionally biased toward low complexity: residues 66–81 (NSPSASSSNLAGGAAA) and 88–103 (SSRNNSTTNFSASSTS). Residues 260-270 (NAGSPNSSTPG) show a composition bias toward polar residues. The segment covering 400 to 412 (RHQMQRREHERRQ) has biased composition (basic and acidic residues). Positions 413 to 429 (AAAAAQQQQQQQQHHAQ) are enriched in low complexity. 2 stretches are compositionally biased toward basic and acidic residues: residues 507 to 605 (EIKG…EEQK) and 613 to 662 (AKAE…KIDE). Residues 663–686 (ENGNAEEADEEADDDDEDDEEEGD) are compositionally biased toward acidic residues. Positions 701 to 713 (SKSKKKNKKKGKK) are enriched in basic residues.

Belongs to the KNR4/SMI1 family.

The protein is KNR4/SMI1 homolog of Yarrowia lipolytica (strain CLIB 122 / E 150) (Yeast).